The following is a 502-amino-acid chain: CBL-interacting serine/threonine-protein kinase 13 (502 aa).

The disordered stretch occupies residues T32–S51. Positions E35–P48 are enriched in low complexity. Positions Y57–F311 constitute a Protein kinase domain. ATP-binding positions include L63–V71 and K86. D179 (proton acceptor) is an active-site residue. Residues D197 to E226 are activation loop. Residue S201 is modified to Phosphoserine. Phosphothreonine is present on T215. The tract at residues D331–I359 is disordered. Positions S340 to E352 are enriched in low complexity. An NAF domain is found at P366–E387. Residues G390–V419 are PPI.

Belongs to the protein kinase superfamily. CAMK Ser/Thr protein kinase family. SNF1 subfamily. Interacts with CBL2 and CBL3. Mn(2+) is required as a cofactor.

It catalyses the reaction L-seryl-[protein] + ATP = O-phospho-L-seryl-[protein] + ADP + H(+). The catalysed reaction is L-threonyl-[protein] + ATP = O-phospho-L-threonyl-[protein] + ADP + H(+). In terms of biological role, CIPK serine-threonine protein kinases interact with CBL proteins. Binding of a CBL protein to the regulatory NAF domain of CIPK protein lead to the activation of the kinase in a calcium-dependent manner. This is CBL-interacting serine/threonine-protein kinase 13 (CIPK13) from Arabidopsis thaliana (Mouse-ear cress).